The following is a 305-amino-acid chain: Probable cell division protein WhiA (305 aa).

Residues 272–305 (SIQQLADSLTVPITKSGVNHRLRKINKIADELTD) constitute a DNA-binding region (H-T-H motif).

The protein belongs to the WhiA family.

Its function is as follows. Involved in cell division and chromosome segregation. The sequence is that of Probable cell division protein WhiA from Streptococcus suis (strain 98HAH33).